A 152-amino-acid chain; its full sequence is Acidic phospholipase A2 homolog textilotoxin D chain (152 aa).

Residues Met1–Ala19 form the signal peptide. Intrachain disulfides connect Cys38–Cys104, Cys54–Cys151, Cys56–Cys72, Cys71–Cys132, Cys78–Cys125, Cys88–Cys118, and Cys111–Cys123. N-linked (GlcNAc...) asparagine glycosylation occurs at Asn112.

Belongs to the phospholipase A2 family. Group I subfamily. D49 sub-subfamily. Heterohexamer. 2 forms exist: 2 A or 2 B chains, 2 C chains and 2 covalently-linked D chains, and 1 A or 1 B, 1 C, 2 covalently-linked D chains and 2 differentially glycosylated covalently-linked D chains. Textilotoxin was originally described as pentameric. In terms of tissue distribution, expressed by the venom gland.

The protein resides in the secreted. In terms of biological role, snake venom oligomeric phospholipase A2 that has potent presynaptic neurotoxicity. Chain D is not itself neurotoxic, but it is essential for the neurotoxicity of textilotoxin. Chain D possesses a very low phospholipase activity. This chain is Acidic phospholipase A2 homolog textilotoxin D chain, found in Pseudonaja textilis (Eastern brown snake).